Here is a 185-residue protein sequence, read N- to C-terminus: Ribosome-recycling factor (185 aa).

The protein belongs to the RRF family.

The protein resides in the cytoplasm. Its function is as follows. Responsible for the release of ribosomes from messenger RNA at the termination of protein biosynthesis. May increase the efficiency of translation by recycling ribosomes from one round of translation to another. In Thermus thermophilus (strain ATCC BAA-163 / DSM 7039 / HB27), this protein is Ribosome-recycling factor.